The primary structure comprises 256 residues: Thiazole synthase (256 aa).

Lys-98 (schiff-base intermediate with DXP) is an active-site residue. Residues Gly-159, 185-186 (AG), and 207-208 (NT) each bind 1-deoxy-D-xylulose 5-phosphate.

It belongs to the ThiG family. Homotetramer. Forms heterodimers with either ThiH or ThiS.

Its subcellular location is the cytoplasm. The enzyme catalyses [ThiS sulfur-carrier protein]-C-terminal-Gly-aminoethanethioate + 2-iminoacetate + 1-deoxy-D-xylulose 5-phosphate = [ThiS sulfur-carrier protein]-C-terminal Gly-Gly + 2-[(2R,5Z)-2-carboxy-4-methylthiazol-5(2H)-ylidene]ethyl phosphate + 2 H2O + H(+). Its pathway is cofactor biosynthesis; thiamine diphosphate biosynthesis. Its function is as follows. Catalyzes the rearrangement of 1-deoxy-D-xylulose 5-phosphate (DXP) to produce the thiazole phosphate moiety of thiamine. Sulfur is provided by the thiocarboxylate moiety of the carrier protein ThiS. In vitro, sulfur can be provided by H(2)S. This Aliivibrio fischeri (strain MJ11) (Vibrio fischeri) protein is Thiazole synthase.